The primary structure comprises 407 residues: MKQQLLERFLSYVSFDTQSDGQNQNVPSTHSQFVFAQHLRQELVSLAFEDVQLSDKGYLTATVPANVEGVPSIGFIAHLDTAPDYSGKNVSPQVIENYNGEDIQLGLAEVLSPKQFSSLNQYIGQTLITTDGTSLLGGDDKAGIAEIISALHHLLTHPEIPHGKIRLCFTPDEEIGRGADHFDVESFGAQWAYTIDGGQVGELEYENFNAATAMITATGNNCHPGTAYGVMVNAQTIAARFHAKMPLKDTPEHSRDYDGFFHLLGMEGVTEKATLTYIIRDFDLELFEKRKQWLTELVEKYNADLSIGQLTIDVQDSYLNMKQQVLPHPHIIDIAKQAMQNLGIEPIIKPIRGGTDGSRLSYMGLPCPNLFTGGHNFHGKHEYVCVESMVKATETIIEIAKLTAEHK.

A Zn(2+)-binding site is contributed by histidine 78. Residue aspartate 80 is part of the active site. Aspartate 139 provides a ligand contact to Zn(2+). Glutamate 173 acts as the Proton acceptor in catalysis. Zn(2+) contacts are provided by glutamate 174, aspartate 196, and histidine 378.

This sequence belongs to the peptidase M20B family. Requires Zn(2+) as cofactor.

Its subcellular location is the cytoplasm. It carries out the reaction Release of the N-terminal residue from a tripeptide.. Cleaves the N-terminal amino acid of tripeptides. The protein is Peptidase T of Shewanella pealeana (strain ATCC 700345 / ANG-SQ1).